Consider the following 147-residue polypeptide: Acidic phospholipase A2 S9-53F (147 aa).

An N-terminal signal peptide occupies residues 1–19 (MYPAHLLVLLAVCVSLLGA). A propeptide spanning residues 20–27 (SDIPPQPL) is cleaved from the precursor. 7 cysteine pairs are disulfide-bonded: Cys38–Cys99, Cys54–Cys146, Cys56–Cys72, Cys71–Cys127, Cys78–Cys120, Cys88–Cys113, and Cys106–Cys118. Ca(2+) is bound by residues Tyr55, Gly57, and Gly59. His75 is an active-site residue. Asp76 provides a ligand contact to Ca(2+). Residue Asp121 is part of the active site.

The protein belongs to the phospholipase A2 family. Group I subfamily. D49 sub-subfamily. The cofactor is Ca(2+). In terms of tissue distribution, expressed by the venom gland.

The protein resides in the secreted. The enzyme catalyses a 1,2-diacyl-sn-glycero-3-phosphocholine + H2O = a 1-acyl-sn-glycero-3-phosphocholine + a fatty acid + H(+). In terms of biological role, snake venom phospholipase A2 (PLA2) that inhibits collagen-induced platelet aggregation. PLA2 catalyzes the calcium-dependent hydrolysis of the 2-acyl groups in 3-sn-phosphoglycerides. The sequence is that of Acidic phospholipase A2 S9-53F from Austrelaps superbus (Lowland copperhead snake).